Consider the following 265-residue polypeptide: Probable S-methyl-5'-thioinosine phosphorylase (265 aa).

Phosphate contacts are provided by residues Ser-15 and 55 to 56; that span reads RH. A substrate-binding site is contributed by Met-187. Thr-188 contacts phosphate. 211-213 lines the substrate pocket; it reads NYA.

It belongs to the PNP/MTAP phosphorylase family. MTAP subfamily. In terms of assembly, homotrimer.

The enzyme catalyses S-methyl-5'-thioinosine + phosphate = 5-(methylsulfanyl)-alpha-D-ribose 1-phosphate + hypoxanthine. The protein operates within purine metabolism; purine nucleoside salvage. In terms of biological role, catalyzes the reversible phosphorylation of S-methyl-5'-thioinosine (MTI) to hypoxanthine and 5-methylthioribose-1-phosphate. Involved in the breakdown of S-methyl-5'-thioadenosine (MTA), a major by-product of polyamine biosynthesis. Catabolism of (MTA) occurs via deamination to MTI and phosphorolysis to hypoxanthine. The protein is Probable S-methyl-5'-thioinosine phosphorylase of Thermodesulfovibrio yellowstonii (strain ATCC 51303 / DSM 11347 / YP87).